The primary structure comprises 240 residues: Transcriptional regulatory protein ChvI (240 aa).

Residues 3–116 (TIALVDDDRN…LLVERVKAIL (114 aa)) enclose the Response regulatory domain. Mg(2+)-binding residues include Asp-8, Asp-9, and Asp-52. A 4-aspartylphosphate modification is found at Asp-52. Positions 139–238 (SRSLERGQLV…LYGVGYRFRE (100 aa)) form a DNA-binding region, ompR/PhoB-type.

Mg(2+) serves as cofactor. In terms of processing, phosphorylated by ChvG.

The protein localises to the cytoplasm. It functions in the pathway glycan metabolism; exopolysaccharide biosynthesis. Functionally, member of a two-component regulatory system ChvG(ExoS)/ChvI involved in regulating the production of succinoglycan. This Rhizobium meliloti (strain 1021) (Ensifer meliloti) protein is Transcriptional regulatory protein ChvI (chvI).